The following is a 156-amino-acid chain: Large ribosomal subunit protein uL15 (156 aa).

The segment covering 1 to 16 (MVRRFKRGTKYRRGSR) has biased composition (basic residues). Positions 1-37 (MVRRFKRGTKYRRGSRTHGWGRVGQHRKSGGSGGKGM) are disordered.

This sequence belongs to the universal ribosomal protein uL15 family. As to quaternary structure, part of the 50S ribosomal subunit.

Functionally, binds to the 23S rRNA. This chain is Large ribosomal subunit protein uL15, found in Pyrobaculum aerophilum (strain ATCC 51768 / DSM 7523 / JCM 9630 / CIP 104966 / NBRC 100827 / IM2).